Reading from the N-terminus, the 450-residue chain is Signal recognition particle 54 kDa protein (450 aa).

GTP contacts are provided by residues 107-114, 188-192, and 247-250; these read GIQGSGKT, DTAGR, and TKLD.

This sequence belongs to the GTP-binding SRP family. SRP54 subfamily. In terms of assembly, part of the signal recognition particle protein translocation system, which is composed of SRP and FtsY. Archaeal SRP consists of a 7S RNA molecule of 300 nucleotides and two protein subunits: SRP54 and SRP19.

The protein resides in the cytoplasm. It catalyses the reaction GTP + H2O = GDP + phosphate + H(+). Involved in targeting and insertion of nascent membrane proteins into the cytoplasmic membrane. Binds to the hydrophobic signal sequence of the ribosome-nascent chain (RNC) as it emerges from the ribosomes. The SRP-RNC complex is then targeted to the cytoplasmic membrane where it interacts with the SRP receptor FtsY. The chain is Signal recognition particle 54 kDa protein from Methanococcus vannielii (strain ATCC 35089 / DSM 1224 / JCM 13029 / OCM 148 / SB).